Consider the following 335-residue polypeptide: Deoxyhypusine hydroxylase (335 aa).

5 HEAT-like PBS-type repeats span residues 74-100, 107-133, 203-233, 241-267, and 274-301; these read LKHE…VLED, CRHE…LRDD, KRYR…LAEG, FRHE…TLSD, and VRHE…FVND. Fe cation contacts are provided by histidine 76, glutamate 77, histidine 109, and glutamate 110. Histidine 243, glutamate 244, histidine 276, and glutamate 277 together coordinate Fe cation.

This sequence belongs to the deoxyhypusine hydroxylase family. Requires Fe(2+) as cofactor.

The protein localises to the cytoplasm. It is found in the nucleus. The catalysed reaction is [eIF5A protein]-deoxyhypusine + AH2 + O2 = [eIF5A protein]-hypusine + A + H2O. The protein operates within protein modification; eIF5A hypusination. In terms of biological role, catalyzes the hydroxylation of the N(6)-(4-aminobutyl)-L-lysine intermediate to form hypusine, an essential post-translational modification only found in mature eIF-5A factor. This is Deoxyhypusine hydroxylase from Coccidioides immitis (strain RS) (Valley fever fungus).